Consider the following 293-residue polypeptide: METGTFKVKSGLAQMLKGGVIMDVTTPEQAKIAEEAGACAVMALERVPSDIRAAGGVARMADPTIIEKIMKVVSIPVMAKCRIGHFVEAQILESMGVDYIDESEVLTPADESFHVWKHDFKVPFVCGCRDLGEALRRIGEGAAMIRTKGEAGTGNIVEAVRHMRSVMGSVRRVQSMSADELSAYAKEINAPLELVLELHKTGKLPVVNFAAGGVATPADAALMMQLGADGVFVGSGIFKSSDPAAMAKAVVKAVTHYKDAKVLAEISKGLGDAMPGLDIKQIEPDKLISRRGW.

D-ribose 5-phosphate is bound at residue Asp23. The active-site Schiff-base intermediate with D-ribose 5-phosphate is the Lys80. Gly152 is a D-ribose 5-phosphate binding site. Position 164 (Arg164) interacts with D-glyceraldehyde 3-phosphate. D-ribose 5-phosphate contacts are provided by residues Gly213 and 234–235; that span reads GS.

This sequence belongs to the PdxS/SNZ family. As to quaternary structure, in the presence of PdxT, forms a dodecamer of heterodimers.

It carries out the reaction aldehydo-D-ribose 5-phosphate + D-glyceraldehyde 3-phosphate + L-glutamine = pyridoxal 5'-phosphate + L-glutamate + phosphate + 3 H2O + H(+). It functions in the pathway cofactor biosynthesis; pyridoxal 5'-phosphate biosynthesis. Catalyzes the formation of pyridoxal 5'-phosphate from ribose 5-phosphate (RBP), glyceraldehyde 3-phosphate (G3P) and ammonia. The ammonia is provided by the PdxT subunit. Can also use ribulose 5-phosphate and dihydroxyacetone phosphate as substrates, resulting from enzyme-catalyzed isomerization of RBP and G3P, respectively. The sequence is that of Pyridoxal 5'-phosphate synthase subunit PdxS from Dehalococcoides mccartyi (strain ATCC BAA-2266 / KCTC 15142 / 195) (Dehalococcoides ethenogenes (strain 195)).